Consider the following 299-residue polypeptide: NAD-dependent protein deacetylase 1 (299 aa).

The Deacetylase sirtuin-type domain occupies 15–292 (LPPGTTDLAP…TTVADRLGLR (278 aa)). NAD(+) contacts are provided by residues 39 to 59 (GAGI…GSLS) and 117 to 120 (QNVD). Residue H135 is the Proton acceptor of the active site. The Zn(2+) site is built by C143, C146, C194, and C197. NAD(+) contacts are provided by residues 234-236 (GSS) and L278.

This sequence belongs to the sirtuin family. Class II subfamily. It depends on Zn(2+) as a cofactor.

It localises to the cytoplasm. It carries out the reaction N(6)-acetyl-L-lysyl-[protein] + NAD(+) + H2O = 2''-O-acetyl-ADP-D-ribose + nicotinamide + L-lysyl-[protein]. In terms of biological role, NAD-dependent protein deacetylase which modulates the activities of several enzymes which are inactive in their acetylated form. The protein is NAD-dependent protein deacetylase 1 of Streptomyces coelicolor (strain ATCC BAA-471 / A3(2) / M145).